Consider the following 461-residue polypeptide: Putative 2,3-dihydroxypropane-1-sulfonate exporter (461 aa).

Residues 1–20 are Cytoplasmic-facing; it reads MSHITTEDPATLRLPFKEKL. The chain crosses the membrane as a helical span at residues 21–41; the sequence is SYGIGDLASNILLDIGTLYLL. Topologically, residues 42 to 47 are periplasmic; it reads KFYTDV. Residues 48-68 traverse the membrane as a helical segment; the sequence is LGLPGTYGGIIFLISKFFTAF. Residues 69–92 are Cytoplasmic-facing; that stretch reads TDMGTGIMLDSRRKIGPKGKFRPF. Residues 93 to 113 form a helical membrane-spanning segment; sequence ILYASFPVTLLAIANFVGTPF. Residues 114–123 are Periplasmic-facing; the sequence is DVTGKTVMAT. The helical transmembrane segment at 124 to 144 threads the bilayer; the sequence is ILFMLYGLFFSMMNCSYGAMV. Residues 145–162 are Cytoplasmic-facing; it reads PAITKNPNERASLAAWRQ. Residues 163–183 form a helical membrane-spanning segment; sequence GGATLGLLLCTVGFVPVMNLI. Residues 184 to 188 lie on the Periplasmic side of the membrane; the sequence is EGNQQ. The helical transmembrane segment at 189–209 threads the bilayer; it reads LGYIFAATLFSLFGLLFMWIC. The Cytoplasmic segment spans residues 210 to 243; the sequence is YSGVKERYVETQPANPAQKPGLLQSFRAIAGNRP. The helical transmembrane segment at 244–264 threads the bilayer; the sequence is LFILCIANLCTLGAFNVKLAI. The Periplasmic portion of the chain corresponds to 265-276; the sequence is QVYYTQYVLNDP. A helical transmembrane segment spans residues 277–297; the sequence is ILLSYMGFFSMGCIFIGVFLM. At 298 to 308 the chain is on the cytoplasmic side; the sequence is PASVRRFGKKK. The chain crosses the membrane as a helical span at residues 309–329; sequence VYIGGLLIWVLGDLLNYFFGG. A topological domain (periplasmic) is located at residue Gly330. A helical membrane pass occupies residues 331–351; that stretch reads SVSFVAFSCLAFFGSAFVNSL. At 352–387 the chain is on the cytoplasmic side; it reads NWALVSDTVEYGEWRTGVRSEGTVYTGFTFFRKVSQ. A helical transmembrane segment spans residues 388–408; sequence ALAGFFPGWMLTQIGYVPNVA. The Periplasmic portion of the chain corresponds to 409-419; that stretch reads QADHTIEGLRQ. A helical membrane pass occupies residues 420 to 440; sequence LIFIYPSALAVVTIVAMGCFY. The Cytoplasmic segment spans residues 441–461; that stretch reads SLNEKMYVRIVEEIEARKRTA.

It belongs to the sodium:galactoside symporter (TC 2.A.2) family.

The protein localises to the cell inner membrane. Functionally, could be involved in the export of 2,3-dihydroxypropane-1-sulfonate (DHPS). This chain is Putative 2,3-dihydroxypropane-1-sulfonate exporter (yihP), found in Escherichia coli (strain K12).